The sequence spans 429 residues: Ribosomal RNA small subunit methyltransferase B (429 aa).

S-adenosyl-L-methionine-binding positions include 254–260, D277, D303, and D322; that span reads CAAPGGK. The active-site Nucleophile is C375.

The protein belongs to the class I-like SAM-binding methyltransferase superfamily. RsmB/NOP family.

It is found in the cytoplasm. The enzyme catalyses cytidine(967) in 16S rRNA + S-adenosyl-L-methionine = 5-methylcytidine(967) in 16S rRNA + S-adenosyl-L-homocysteine + H(+). Functionally, specifically methylates the cytosine at position 967 (m5C967) of 16S rRNA. This is Ribosomal RNA small subunit methyltransferase B from Erwinia tasmaniensis (strain DSM 17950 / CFBP 7177 / CIP 109463 / NCPPB 4357 / Et1/99).